A 266-amino-acid chain; its full sequence is Small ribosomal subunit protein eS1 (266 aa).

Residues 234-266 (EGGTGTATKATGDDTGAKVERADGYEPPIQETV) form a disordered region. Residues 244-257 (TGDDTGAKVERADG) are compositionally biased toward basic and acidic residues.

The protein belongs to the eukaryotic ribosomal protein eS1 family. In terms of assembly, component of the small ribosomal subunit. Mature ribosomes consist of a small (40S) and a large (60S) subunit. The 40S subunit contains about 33 different proteins and 1 molecule of RNA (18S). The 60S subunit contains about 49 different proteins and 3 molecules of RNA (28S, 5.8S and 5S). Part of the small subunit (SSU) processome, composed of more than 70 proteins and the RNA chaperone small nucleolar RNA (snoRNA) U3.

The protein resides in the cytoplasm. The protein localises to the nucleus. It is found in the nucleolus. Component of the small ribosomal subunit. The ribosome is a large ribonucleoprotein complex responsible for the synthesis of proteins in the cell. Part of the small subunit (SSU) processome, first precursor of the small eukaryotic ribosomal subunit. During the assembly of the SSU processome in the nucleolus, many ribosome biogenesis factors, an RNA chaperone and ribosomal proteins associate with the nascent pre-rRNA and work in concert to generate RNA folding, modifications, rearrangements and cleavage as well as targeted degradation of pre-ribosomal RNA by the RNA exosome. May play a role during erythropoiesis. This is Small ribosomal subunit protein eS1 (rps3a) from Solea senegalensis (Senegalese sole).